We begin with the raw amino-acid sequence, 106 residues long: MPLTPPPDHTKVLLVAAIGLSIVASILTYSRNTLPQVGDHSHLLPHGGVYKDGTKTIVYGGPRKLNSLEGGFNLPVQPWFLVILLSAAIFLLSCRSGHRRVCGQCH.

At 1–9 the chain is on the cytoplasmic side; the sequence is MPLTPPPDH. The helical transmembrane segment at 10–30 threads the bilayer; it reads TKVLLVAAIGLSIVASILTYS. Over 31-71 the chain is Lumenal; that stretch reads RNTLPQVGDHSHLLPHGGVYKDGTKTIVYGGPRKLNSLEGG. Residues 72-92 form a helical membrane-spanning segment; that stretch reads FNLPVQPWFLVILLSAAIFLL. At 93-106 the chain is on the cytoplasmic side; sequence SCRSGHRRVCGQCH.

Belongs to the Tymovirales TGBp2 protein family.

It is found in the host endoplasmic reticulum membrane. In terms of biological role, plays a role in viral cell-to-cell propagation, by facilitating genome transport to neighboring plant cells through plasmosdesmata,. This Chrysanthemum morifolium (Florist's daisy) protein is Movement protein TGB2.